The chain runs to 224 residues: Ras-related protein Rab-32C (224 aa).

Positions Met1–Asn22 are disordered. Residue Gly35 to Thr42 participates in GTP binding. The short motif at Tyr57–Phe65 is the Effector region element. GTP is bound by residues Asp83 to Gln87 and Asn142 to Asp145. Residues Gly203–Cys224 are disordered. The segment covering Gln209–Cys224 has biased composition (low complexity). 2 S-geranylgeranyl cysteine lipidation sites follow: Cys223 and Cys224.

Belongs to the small GTPase superfamily. Rab family.

This Dictyostelium discoideum (Social amoeba) protein is Ras-related protein Rab-32C (rab32C).